A 235-amino-acid chain; its full sequence is Purine nucleoside phosphorylase DeoD-type (235 aa).

His-4 provides a ligand contact to a purine D-ribonucleoside. Phosphate-binding positions include Gly-20, Arg-24, Arg-43, and 87-90 (RVGT). A purine D-ribonucleoside is bound by residues Glu-162, 179–181 (EME), and 203–204 (SD). The active-site Proton donor is the Asp-204.

It belongs to the PNP/UDP phosphorylase family. In terms of assembly, homohexamer; trimer of homodimers.

It carries out the reaction a purine D-ribonucleoside + phosphate = a purine nucleobase + alpha-D-ribose 1-phosphate. The enzyme catalyses a purine 2'-deoxy-D-ribonucleoside + phosphate = a purine nucleobase + 2-deoxy-alpha-D-ribose 1-phosphate. Functionally, catalyzes the reversible phosphorolytic breakdown of the N-glycosidic bond in the beta-(deoxy)ribonucleoside molecules, with the formation of the corresponding free purine bases and pentose-1-phosphate. This is Purine nucleoside phosphorylase DeoD-type from Bacillus anthracis (strain CDC 684 / NRRL 3495).